The sequence spans 547 residues: Mercuric reductase (547 aa).

Residues 5–70 enclose the HMA domain; it reads APTELAITGM…AVVASGYGVH (66 aa). A metal cation contacts are provided by Cys-16 and Cys-19. Positions 96 and 121 each coordinate FAD. Cys-122 and Cys-127 form a disulfide bridge. FAD is bound by residues Lys-131, Ala-197, Asp-389, and Val-397. Hg(2+) is bound by residues Cys-544 and Cys-545.

Belongs to the class-I pyridine nucleotide-disulfide oxidoreductase family. In terms of assembly, homodimer. FAD is required as a cofactor.

It catalyses the reaction Hg + NADP(+) + H(+) = Hg(2+) + NADPH. In terms of biological role, resistance to Hg(2+) in bacteria appears to be governed by a specialized system which includes mercuric reductase. MerA protein is responsible for volatilizing mercury as Hg(0). This is Mercuric reductase (merA) from Acidithiobacillus ferrooxidans (Thiobacillus ferrooxidans).